We begin with the raw amino-acid sequence, 156 residues long: Non-structural protein 2 (156 aa).

The protein belongs to the pneumovirus non-structural protein 2 family.

Its subcellular location is the host cytoplasm. In terms of biological role, plays a major role in antagonizing the type I IFN-mediated antiviral response. May also inhibit viral transcription and RNA replication. This is Non-structural protein 2 (1B) from Mus musculus (Mouse).